Consider the following 689-residue polypeptide: Glycine--tRNA ligase beta subunit (689 aa).

This sequence belongs to the class-II aminoacyl-tRNA synthetase family. In terms of assembly, tetramer of two alpha and two beta subunits.

Its subcellular location is the cytoplasm. The enzyme catalyses tRNA(Gly) + glycine + ATP = glycyl-tRNA(Gly) + AMP + diphosphate. This chain is Glycine--tRNA ligase beta subunit, found in Shewanella piezotolerans (strain WP3 / JCM 13877).